Consider the following 216-residue polypeptide: Probable GTP-binding protein EngB (216 aa).

An EngB-type G domain is found at 37 to 214 (AGLEVAFAGR…RAAMIKLIAE (178 aa)). Residues 45–52 (GRSNVGKS), 72–76 (GRTQE), 92–95 (DMPG), 159–162 (TKAD), and 193–195 (TSS) contribute to the GTP site. Ser52 and Thr74 together coordinate Mg(2+).

It belongs to the TRAFAC class TrmE-Era-EngA-EngB-Septin-like GTPase superfamily. EngB GTPase family. It depends on Mg(2+) as a cofactor.

Functionally, necessary for normal cell division and for the maintenance of normal septation. The protein is Probable GTP-binding protein EngB of Rhodopseudomonas palustris (strain BisB18).